Reading from the N-terminus, the 549-residue chain is Myotubularin-related protein 9 (549 aa).

The residue at position 1 (Met1) is an N-acetylmethionine. The GRAM domain occupies 4–99; it reads AELIKTPRVD…LNIASSIEAL (96 aa). The 376-residue stretch at 123 to 498 folds into the Myotubularin phosphatase domain; it reads GWHSFLPEQE…QSLPLWEGIF (376 aa). Positions 508-542 form a coiled coil; it reads LDEAYEEMVNIIEYNKELQAKVNILRRQLAELETE. Ser548 bears the Phosphoserine mark.

Belongs to the protein-tyrosine phosphatase family. Non-receptor class myotubularin subfamily. As to quaternary structure, homodimer. Heterodimer (via C-terminus) with lipid phosphatase MTMR6 (via C-terminus). Heterodimer (via coiled coil domain) with lipid phosphatase MTMR7 (via C-terminus). Heterodimer with lipid phosphatase MTMR8. As to expression, expressed in many tissues.

It is found in the cytoplasm. It localises to the cell projection. The protein localises to the ruffle membrane. Its subcellular location is the perinuclear region. The protein resides in the endoplasmic reticulum. Its function is as follows. Acts as an adapter for myotubularin-related phosphatases. Increases lipid phosphatase MTMR6 catalytic activity, specifically towards phosphatidylinositol 3,5-bisphosphate and MTMR6 binding affinity for phosphorylated phosphatidylinositols. Positively regulates lipid phosphatase MTMR7 catalytic activity. Increases MTMR8 catalytic activity towards phosphatidylinositol 3-phosphate. The formation of the MTMR6-MTMR9 complex, stabilizes both MTMR6 and MTMR9 protein levels. Stabilizes MTMR8 protein levels. Plays a role in the late stages of macropinocytosis possibly by regulating MTMR6-mediated dephosphorylation of phosphatidylinositol 3-phosphate in membrane ruffles. Negatively regulates autophagy, in part via its association with MTMR8. Negatively regulates DNA damage-induced apoptosis, in part via its association with MTMR6. Does not bind mono-, di- and tri-phosphorylated phosphatidylinositols, phosphatidic acid and phosphatidylserine. This chain is Myotubularin-related protein 9 (MTMR9), found in Homo sapiens (Human).